Consider the following 253-residue polypeptide: Ribosome-inactivating protein saporin-5 (253 aa).

The active site involves Glu176.

It belongs to the ribosome-inactivating protein family. Type 1 RIP subfamily.

It catalyses the reaction Endohydrolysis of the N-glycosidic bond at one specific adenosine on the 28S rRNA.. Functionally, ribosome-inactivating protein of type 1, inhibits protein synthesis in animal cells. In Saponaria officinalis (Common soapwort), this protein is Ribosome-inactivating protein saporin-5 (SAP5).